Consider the following 167-residue polypeptide: 3-isopropylmalate dehydratase small subunit (167 aa).

This sequence belongs to the LeuD family. LeuD type 2 subfamily. As to quaternary structure, heterodimer of LeuC and LeuD.

It carries out the reaction (2R,3S)-3-isopropylmalate = (2S)-2-isopropylmalate. The protein operates within amino-acid biosynthesis; L-leucine biosynthesis; L-leucine from 3-methyl-2-oxobutanoate: step 2/4. Its function is as follows. Catalyzes the isomerization between 2-isopropylmalate and 3-isopropylmalate, via the formation of 2-isopropylmaleate. The polypeptide is 3-isopropylmalate dehydratase small subunit (Oleidesulfovibrio alaskensis (strain ATCC BAA-1058 / DSM 17464 / G20) (Desulfovibrio alaskensis)).